Consider the following 212-residue polypeptide: Large ribosomal subunit protein uL3 (212 aa).

Gln-153 carries the post-translational modification N5-methylglutamine.

The protein belongs to the universal ribosomal protein uL3 family. As to quaternary structure, part of the 50S ribosomal subunit. Forms a cluster with proteins L14 and L19. In terms of processing, methylated by PrmB.

Functionally, one of the primary rRNA binding proteins, it binds directly near the 3'-end of the 23S rRNA, where it nucleates assembly of the 50S subunit. This Marinobacter nauticus (strain ATCC 700491 / DSM 11845 / VT8) (Marinobacter aquaeolei) protein is Large ribosomal subunit protein uL3.